The following is a 149-amino-acid chain: Calmodulin-1 (149 aa).

EF-hand domains follow at residues 8–43, 44–79, 81–116, and 117–149; these read EQIS…LGQN, PTEA…KMKD, DSEE…LGEK, and LTDE…MMAK. Ca(2+) is bound by residues Asp-21, Asp-23, Asp-25, Cys-27, Glu-32, Asp-57, Asp-59, Asn-61, Thr-63, Glu-68, Asp-94, Asp-96, Asn-98, Glu-105, Asp-130, Asp-132, Asp-134, Gln-136, and Glu-141.

Belongs to the calmodulin family. Interacts with ZAR1 (via CaMBD domain). Binds to IQD1. Binds to MEE62 in a calcium-dependent manner.

Its subcellular location is the cytoplasm. It is found in the cell membrane. Calmodulin mediates the control of a large number of enzymes, ion channels and other proteins by Ca(2+). Among the enzymes to be stimulated by the calmodulin-Ca(2+) complex are a number of protein kinases and phosphatases. The protein is Calmodulin-1 (CAM1) of Arabidopsis thaliana (Mouse-ear cress).